Here is a 345-residue protein sequence, read N- to C-terminus: Glycosyltransferase 1 domain-containing protein 1 (345 aa).

The N-terminal stretch at 1 to 19 (MKILFLACLRAHTGNSTTA) is a signal peptide. N-linked (GlcNAc...) asparagine glycosylation is found at N246 and N322.

This sequence belongs to the glycosyltransferase group 1 family. Glycosyltransferase 4 subfamily.

It is found in the secreted. The protein is Glycosyltransferase 1 domain-containing protein 1 (glt1d1) of Xenopus tropicalis (Western clawed frog).